A 306-amino-acid chain; its full sequence is Metal ABC transporter substrate-binding lipoprotein SloC (306 aa).

Positions 1-19 (MKKLSLLLLVCLSLLGLFA) are cleaved as a signal peptide. C20 carries N-palmitoyl cysteine lipidation. C20 carries S-diacylglycerol cysteine lipidation. A divalent metal cation is bound by residues H64, H136, E202, and D277.

It belongs to the bacterial solute-binding protein 9 family. Lipoprotein receptor antigen (Lrai) subfamily.

The protein localises to the cell membrane. Functionally, part of the ATP-binding cassette (ABC) transport system SloABC involved in metal import. Binds a metal with high affinity and specificity and delivers it to the membrane permease for translocation into the cytoplasm. May act as an adhesin which is involved on adherence to extracellular matrix. It is an important factor in pathogenesis and infection. May contribute to the formation and accumulation of dental plaque. This is Metal ABC transporter substrate-binding lipoprotein SloC (sloC) from Streptococcus mutans serotype c (strain ATCC 700610 / UA159).